Consider the following 424-residue polypeptide: Glutamate-1-semialdehyde 2,1-aminomutase (424 aa).

Residue Lys-263 is modified to N6-(pyridoxal phosphate)lysine.

Belongs to the class-III pyridoxal-phosphate-dependent aminotransferase family. HemL subfamily. In terms of assembly, homodimer. The cofactor is pyridoxal 5'-phosphate.

The protein resides in the cytoplasm. The enzyme catalyses (S)-4-amino-5-oxopentanoate = 5-aminolevulinate. It functions in the pathway porphyrin-containing compound metabolism; protoporphyrin-IX biosynthesis; 5-aminolevulinate from L-glutamyl-tRNA(Glu): step 2/2. The sequence is that of Glutamate-1-semialdehyde 2,1-aminomutase from Campylobacter jejuni subsp. jejuni serotype O:2 (strain ATCC 700819 / NCTC 11168).